The primary structure comprises 103 residues: Pro-corazonin (103 aa).

The N-terminal stretch at 1 to 19 is a signal peptide; the sequence is MSANVTLLLIFVTLASVTA. Glutamine 20 carries the pyrrolidone carboxylic acid modification. Asparagine amide is present on asparagine 30. The propeptide occupies 34 to 103; the sequence is DQGHLRPELK…NLNAMMDAFY (70 aa).

In terms of tissue distribution, expressed in corpora cardiaca (CC), corpora allata (CA), antennal lobe (AL) and gnathal ganglion (GNG) (at protein level). Expression in CC and CA detected in all animals, expression in AL and in GNG in some animals.

Its subcellular location is the secreted. In terms of biological role, cardioactive peptide. Corazonin is probably involved in the physiological regulation of the heart beat. This chain is Pro-corazonin, found in Agrotis ipsilon (Black cutworm moth).